The following is a 251-amino-acid chain: Pyruvate formate-lyase-activating enzyme (251 aa).

A Radical SAM core domain is found at 15-244 (VDGPGLRYIL…KEAYRYVNFN (230 aa)). The [4Fe-4S] cluster site is built by Cys29, Cys33, and Cys36. S-adenosyl-L-methionine-binding positions include 35–37 (YCH), Gly79, 134–136 (DIK), and His207.

It belongs to the organic radical-activating enzymes family. [4Fe-4S] cluster serves as cofactor.

The protein resides in the cytoplasm. The catalysed reaction is glycyl-[formate C-acetyltransferase] + reduced [flavodoxin] + S-adenosyl-L-methionine = glycin-2-yl radical-[formate C-acetyltransferase] + semiquinone [flavodoxin] + 5'-deoxyadenosine + L-methionine + H(+). Functionally, activation of pyruvate formate-lyase under anaerobic conditions by generation of an organic free radical, using S-adenosylmethionine and reduced flavodoxin as cosubstrates to produce 5'-deoxy-adenosine. This Staphylococcus epidermidis (strain ATCC 12228 / FDA PCI 1200) protein is Pyruvate formate-lyase-activating enzyme (pflA).